A 177-amino-acid chain; its full sequence is Parathyroid hormone-related protein (177 aa).

The N-terminal stretch at 1-24 is a signal peptide; sequence MQRRLVQQWSVAVFLLSYAVPSCG. Residues 25 to 34 constitute a propeptide that is removed on maturation; sequence RSVEGLSRRL. The segment at 57–68 is important for receptor binding; the sequence is RFFLHHLIAEIH. The segment at 74–177 is disordered; it reads ATSEVSPNSK…TSLELDSRRH (104 aa). Residues 76 to 90 are compositionally biased toward polar residues; it reads SEVSPNSKPSPNTKN. Positions 108 to 129 match the Nuclear localization signal motif; it reads TNKVETYKEQPLKTPGKKKKGK. Residues 109 to 118 show a composition bias toward basic and acidic residues; it reads NKVETYKEQP. The span at 122–132 shows a compositional bias: basic residues; that stretch reads PGKKKKGKPGK.

This sequence belongs to the parathyroid hormone family. In terms of assembly, interacts with PTH1R (via N-terminal extracellular domain). There are 3 principal secretory forms, called PTHrP[1-36], PTHrP[38-94], and osteostatin (PTHrP[107-139]) arising from endoproteolytic cleavage of the initial translation product. Each of these secretory forms is believed to have one or more of its own receptors that mediates the normal paracrine, autocrine and endocrine actions. Ubiquitous. Also expressed in the mammary gland.

It is found in the secreted. The protein resides in the cytoplasm. Its subcellular location is the nucleus. Neuroendocrine peptide which is a critical regulator of cellular and organ growth, development, migration, differentiation and survival and of epithelial calcium ion transport. Acts by binding to its receptor, PTH1R, activating G protein-coupled receptor signaling. Regulates endochondral bone development and epithelial-mesenchymal interactions during the formation of the mammary glands and teeth. Required for skeletal homeostasis. Promotes mammary mesenchyme differentiation and bud outgrowth by modulating mesenchymal cell responsiveness to BMPs. Up-regulates BMPR1A expression in the mammary mesenchyme and this increases the sensitivity of these cells to BMPs and allows them to respond to BMP4 in a paracrine and/or autocrine fashion. BMP4 signaling in the mesenchyme, in turn, triggers epithelial outgrowth and augments MSX2 expression, which causes the mammary mesenchyme to inhibit hair follicle formation within the nipple sheath. Promotes colon cancer cell migration and invasion in an integrin alpha-6/beta-1-dependent manner through activation of Rac1. In terms of biological role, potent inhibitor of osteoclastic bone resorption. In Homo sapiens (Human), this protein is Parathyroid hormone-related protein.